The primary structure comprises 217 residues: D-methionine transport system permease protein MetI (217 aa).

Topologically, residues 1–19 (MSEPMMWLLVRGVWETLAM) are periplasmic. The 192-residue stretch at 13–204 (VWETLAMTFV…LLVILVYLIQ (192 aa)) folds into the ABC transmembrane type-1 domain. Residues 20 to 40 (TFVSGFFGFVIGLPVGVLLYV) form a helical membrane-spanning segment. Residues 41-57 (TRPGQIIANAKLYRTVS) lie on the Cytoplasmic side of the membrane. Residues 58–78 (AIVNIFRSIPFIILLVWMIPF) form a helical membrane-spanning segment. The Periplasmic portion of the chain corresponds to 79-80 (TR). The helical transmembrane segment at 81–101 (VIVGTSIGLQAAIVPLTVGAA) threads the bilayer. Over 102-151 (PFIARMVENALLEIPTGLIEASRAMGATPMQIVRKVLLPEALPGLVNAAT) the chain is Cytoplasmic. A helical membrane pass occupies residues 152-172 (ITLITLVGYSAMGGAVGAGGL). Topologically, residues 173-185 (GQIGYQYGYIGYN) are periplasmic. A helical membrane pass occupies residues 186–206 (ATVMNTVLVLLVILVYLIQFA). The Cytoplasmic portion of the chain corresponds to 207 to 217 (GDRIVRAVTRK).

The protein belongs to the binding-protein-dependent transport system permease family. CysTW subfamily.

The protein localises to the cell inner membrane. In terms of biological role, part of the binding-protein-dependent transport system for D-methionine and the toxic methionine analog alpha-methyl-methionine. Probably responsible for the translocation of the substrate across the membrane. Functionally, (Microbial infection) Probably transports the toxic C-terminal region of CdiA from E.coli strain MHI813 across the inner membrane to the cytoplasm, where CdiA has a toxic effect. Toxin transport is strain-specific, mutations in this gene do not confer resistance to several other tested CdiA toxins. In Escherichia coli (strain K12), this protein is D-methionine transport system permease protein MetI (metI).